Reading from the N-terminus, the 77-residue chain is Acyl carrier protein (77 aa).

Residues methionine 1–lysine 76 form the Carrier domain. Serine 36 carries the O-(pantetheine 4'-phosphoryl)serine modification.

Belongs to the acyl carrier protein (ACP) family. 4'-phosphopantetheine is transferred from CoA to a specific serine of apo-ACP by AcpS. This modification is essential for activity because fatty acids are bound in thioester linkage to the sulfhydryl of the prosthetic group.

It is found in the cytoplasm. It participates in lipid metabolism; fatty acid biosynthesis. Carrier of the growing fatty acid chain in fatty acid biosynthesis. The chain is Acyl carrier protein from Campylobacter jejuni subsp. jejuni serotype O:6 (strain 81116 / NCTC 11828).